Reading from the N-terminus, the 251-residue chain is Hydroxyacylglutathione hydrolase (251 aa).

Zn(2+) is bound by residues His53, His55, Asp57, His58, His110, Asp127, and His165.

This sequence belongs to the metallo-beta-lactamase superfamily. Glyoxalase II family. In terms of assembly, monomer. Requires Zn(2+) as cofactor.

The enzyme catalyses an S-(2-hydroxyacyl)glutathione + H2O = a 2-hydroxy carboxylate + glutathione + H(+). It participates in secondary metabolite metabolism; methylglyoxal degradation; (R)-lactate from methylglyoxal: step 2/2. Thiolesterase that catalyzes the hydrolysis of S-D-lactoyl-glutathione to form glutathione and D-lactic acid. This chain is Hydroxyacylglutathione hydrolase, found in Shigella boydii serotype 4 (strain Sb227).